Consider the following 64-residue polypeptide: Small ribosomal subunit protein bS21 (64 aa).

It belongs to the bacterial ribosomal protein bS21 family.

The sequence is that of Small ribosomal subunit protein bS21 from Pelagibacter ubique (strain HTCC1062).